The sequence spans 447 residues: Tol-Pal system protein TolB (447 aa).

Positions 1 to 34 are cleaved as a signal peptide; that stretch reads MSSRLPALPLSRRQALLGGAGSAAALLLPGGAQA. The tract at residues 426–447 is disordered; sequence RNEQKVPTPGFASDPAWSPLLS.

The protein belongs to the TolB family. In terms of assembly, the Tol-Pal system is composed of five core proteins: the inner membrane proteins TolA, TolQ and TolR, the periplasmic protein TolB and the outer membrane protein Pal. They form a network linking the inner and outer membranes and the peptidoglycan layer.

The protein resides in the periplasm. Part of the Tol-Pal system, which plays a role in outer membrane invagination during cell division and is important for maintaining outer membrane integrity. The polypeptide is Tol-Pal system protein TolB (Rhodopseudomonas palustris (strain BisB18)).